Reading from the N-terminus, the 222-residue chain is MVLRSEILVNKNVMPTAEQALPGRETPMSLPEFHYVFEGTPLLGPFFEGAIDFAIFGLGCFWGAERRFWQREGVVSTVVGYAGGFTPHPTYEEVCSGLTGHTEVVLVVFDKDKVSYRELLAMFWELHNPTQGMRQGNDVGTQYRSAIYCTSPEQLEQAEASRDAFQAELSKAGFGEITTEIDQAPTVYFAEAYHQQYLAKNPQGYCGIGGTGVCLPPSLQGN.

Residue C60 is part of the active site.

It belongs to the MsrA Met sulfoxide reductase family.

The enzyme catalyses L-methionyl-[protein] + [thioredoxin]-disulfide + H2O = L-methionyl-(S)-S-oxide-[protein] + [thioredoxin]-dithiol. The catalysed reaction is [thioredoxin]-disulfide + L-methionine + H2O = L-methionine (S)-S-oxide + [thioredoxin]-dithiol. Functionally, has an important function as a repair enzyme for proteins that have been inactivated by oxidation. Catalyzes the reversible oxidation-reduction of methionine sulfoxide in proteins to methionine. The polypeptide is Peptide methionine sulfoxide reductase MsrA (Pseudomonas putida (strain GB-1)).